We begin with the raw amino-acid sequence, 217 residues long: Ribulose-phosphate 3-epimerase (217 aa).

Ser-6 contacts substrate. Positions 29, 31, and 62 each coordinate a divalent metal cation. The active-site Proton acceptor is the Asp-31. Residues His-62, 138 to 141 (GFGG), 171 to 173 (DGG), and 193 to 194 (GS) each bind substrate. Asp-171 contacts a divalent metal cation. Catalysis depends on Asp-171, which acts as the Proton donor.

This sequence belongs to the ribulose-phosphate 3-epimerase family. Requires a divalent metal cation as cofactor.

It catalyses the reaction D-ribulose 5-phosphate = D-xylulose 5-phosphate. It functions in the pathway carbohydrate degradation. In terms of biological role, catalyzes the reversible epimerization of D-ribulose 5-phosphate to D-xylulose 5-phosphate. The chain is Ribulose-phosphate 3-epimerase from Helicobacter pylori (strain ATCC 700392 / 26695) (Campylobacter pylori).